A 387-amino-acid chain; its full sequence is MSVIKMTDLDLAGKRVLIRADLNVPVKDGKVTSDARIVATLPTIKLALEKGAKLMITSHLGRPTEGEYNEEFSLAPVVNYLKDALSCPVRLAKDYLDGVEVAAGELVVLENCRFNKGEKKNTEELAKKYAALCDVFVMDAFGTAHRAEGSTYGVAQFAPVACAGPLLAGELEALGKAMLKPERPMVAIVGGSKVSTKLTVLESLSKIADQLVVGGGIANTFIAAAGHNVGKSLCEHDLIDTAKKLAAETNIPVTTDVVVGAEFSESTPATIKSVADVTDGDMIFDIGPDSAKALADIIMNAKTILWNGPVGVFEFDQFAEGTKVIAEAIAASPAFSIAGGGDTLAAIDKFGIADKVSYISTGGGAFLEFVEGKVLPAVAILEQRAKA.

Substrate is bound by residues 21 to 23 (DLN), arginine 36, 59 to 62 (HLGR), arginine 113, and arginine 146. ATP-binding positions include lysine 197, glutamate 314, and 340-343 (GGDT).

The protein belongs to the phosphoglycerate kinase family. In terms of assembly, monomer.

It is found in the cytoplasm. It catalyses the reaction (2R)-3-phosphoglycerate + ATP = (2R)-3-phospho-glyceroyl phosphate + ADP. Its pathway is carbohydrate degradation; glycolysis; pyruvate from D-glyceraldehyde 3-phosphate: step 2/5. In Aeromonas hydrophila subsp. hydrophila (strain ATCC 7966 / DSM 30187 / BCRC 13018 / CCUG 14551 / JCM 1027 / KCTC 2358 / NCIMB 9240 / NCTC 8049), this protein is Phosphoglycerate kinase.